Consider the following 313-residue polypeptide: 2-phosphoglycerate kinase (313 aa).

The ATP-cone domain maps to S8–S95.

The protein belongs to the 2-phosphoglycerate kinase family. The cofactor is a divalent metal cation.

It carries out the reaction (2R)-2-phosphoglycerate + ATP = (2R)-2,3-bisphosphoglycerate + ADP + H(+). It functions in the pathway thermoadapter biosynthesis; cyclic 2,3-diphosphoglycerate biosynthesis; cyclic 2,3-diphosphoglycerate from 2-phospho-D-glycerate: step 1/2. Its function is as follows. Catalyzes the phosphorylation of 2-phosphoglycerate to 2,3-diphosphoglycerate. Involved in the biosynthesis of cyclic 2,3-bisphosphoglycerate, a thermoprotectant. This Methanococcus maripaludis (strain C6 / ATCC BAA-1332) protein is 2-phosphoglycerate kinase.